The chain runs to 528 residues: Abrin-d (528 aa).

Residue Gln1 is modified to Pyrrolidone carboxylic acid. Glu164 is an active-site residue. An N-linked (GlcNAc...) asparagine glycan is attached at Asn200. 3 disulfides stabilise this stretch: Cys247–Cys269, Cys286–Cys305, and Cys329–Cys346. The Ricin B-type lectin 1 domain occupies 273-400 (YEPTVRIGGR…YLMRQGWRTG (128 aa)). A 1-alpha repeat occupies 283–325 (DGMCVDVYDDGYHNGNRIIAWKCKDRLEENQLWTLKSDLTIRS). Residues 326-366 (NGKCLTTEGYAPGNYVMIYDCTSAVAEATYWEIWDNGTIIN) form a 1-beta repeat. Asn361 and Asn401 each carry an N-linked (GlcNAc...) asparagine glycan. The stretch at 369-401 (SALVLSAESSSMGGTLTVQTNEYLMRQGWRTGN) is one 1-gamma repeat. The 125-residue stretch at 403-527 (TSPFVTSISG…GKPNQIWLTL (125 aa)) folds into the Ricin B-type lectin 2 domain. The 2-alpha repeat unit spans residues 414–449 (SDLCMQAQGSNVWLADCDNNKKEQQWALYTDGSIRS). 2 disulfides stabilise this stretch: Cys417–Cys430 and Cys456–Cys473. A 2-beta repeat occupies 453–492 (TNNCLTSKDHKQGSPIVLMACSNGWASQRWLFKNDGSIYS). A 2-gamma repeat occupies 495–528 (DDMVMDVKGSDPSLKQIILWPYTGKPNQIWLTLF).

It in the N-terminal section; belongs to the ribosome-inactivating protein family. Type 2 RIP subfamily. As to quaternary structure, disulfide-linked dimer of A and B chains.

It carries out the reaction Endohydrolysis of the N-glycosidic bond at one specific adenosine on the 28S rRNA.. Its function is as follows. The A chain is responsible for inhibiting protein synthesis through the catalytic inactivation of 60S ribosomal subunits by removing adenine from position 4,324 of 28S rRNA. Functionally, the B chain is a galactose-specific lectin that facilitates the binding of abrin to the cell membrane that precedes endocytosis. The polypeptide is Abrin-d (Abrus precatorius (Indian licorice)).